We begin with the raw amino-acid sequence, 243 residues long: 1-(5-phosphoribosyl)-5-[(5-phosphoribosylamino)methylideneamino] imidazole-4-carboxamide isomerase (243 aa).

D8 serves as the catalytic Proton acceptor. D130 serves as the catalytic Proton donor.

The protein belongs to the HisA/HisF family.

The protein resides in the cytoplasm. The catalysed reaction is 1-(5-phospho-beta-D-ribosyl)-5-[(5-phospho-beta-D-ribosylamino)methylideneamino]imidazole-4-carboxamide = 5-[(5-phospho-1-deoxy-D-ribulos-1-ylimino)methylamino]-1-(5-phospho-beta-D-ribosyl)imidazole-4-carboxamide. The protein operates within amino-acid biosynthesis; L-histidine biosynthesis; L-histidine from 5-phospho-alpha-D-ribose 1-diphosphate: step 4/9. The chain is 1-(5-phosphoribosyl)-5-[(5-phosphoribosylamino)methylideneamino] imidazole-4-carboxamide isomerase from Acinetobacter baumannii (strain SDF).